Consider the following 179-residue polypeptide: MTSALFGLNNLAPEGVGQNFRTTMRRFPATVTVITACATGDQRDHGMTVTAVTSVSMEPPSLLVCLNNRTFLHELLLCRPDFIVNVLTQDQIALSDAFSGKVSPEERFRNGEWQRHDNGVLYLPTAHAAIACRRVAAMPYGTHTVFIGQVVSADVSETTRPLLYENAQYCAASPAGLSA.

The protein belongs to the non-flavoprotein flavin reductase family. The FADH(2)-dependent resorcinol hydroxylase is composed of two subunits, GraA (the oxygenase component) and GraD (the reductase component). Both subunits are required for activity.

It catalyses the reaction FADH2 + NAD(+) = FAD + NADH + 2 H(+). Its pathway is aromatic compound metabolism. Functionally, involved in the gamma-resorcylate (2,6-dihydroxybenzoate) catabolism. Reductase component of the resorcinol hydroxylase, which catalyzes the FADPH-dependent conversion of resorcinol to hydroxyquinol. Catalyzes the reduction of FAD by NADH. The reduced flavin is then transferred to the oxygenase component GraA. This Rhizobium sp. (strain MTP-10005) protein is FADH(2)-dependent resorcinol hydroxylase, reductase component.